The chain runs to 140 residues: NADPH-dependent 7-cyano-7-deazaguanine reductase (140 aa).

The active-site Thioimide intermediate is the C49. D56 serves as the catalytic Proton donor. Substrate is bound by residues 71–73 (IEL) and 90–91 (HE).

Belongs to the GTP cyclohydrolase I family. QueF type 1 subfamily.

Its subcellular location is the cytoplasm. It carries out the reaction 7-aminomethyl-7-carbaguanine + 2 NADP(+) = 7-cyano-7-deazaguanine + 2 NADPH + 3 H(+). It participates in tRNA modification; tRNA-queuosine biosynthesis. Catalyzes the NADPH-dependent reduction of 7-cyano-7-deazaguanine (preQ0) to 7-aminomethyl-7-deazaguanine (preQ1). This chain is NADPH-dependent 7-cyano-7-deazaguanine reductase, found in Prochlorococcus marinus (strain NATL2A).